The chain runs to 452 residues: uncharacterized protein (452 aa).

The protein localises to the cytoplasm. It localises to the nucleus. This is an uncharacterized protein from Schizosaccharomyces pombe (strain 972 / ATCC 24843) (Fission yeast).